Consider the following 336-residue polypeptide: Phosphate acyltransferase (336 aa).

It belongs to the PlsX family. Homodimer. Probably interacts with PlsY.

It localises to the cytoplasm. The catalysed reaction is a fatty acyl-[ACP] + phosphate = an acyl phosphate + holo-[ACP]. The protein operates within lipid metabolism; phospholipid metabolism. Catalyzes the reversible formation of acyl-phosphate (acyl-PO(4)) from acyl-[acyl-carrier-protein] (acyl-ACP). This enzyme utilizes acyl-ACP as fatty acyl donor, but not acyl-CoA. This Pseudomonas fluorescens (strain Pf0-1) protein is Phosphate acyltransferase.